Reading from the N-terminus, the 718-residue chain is Protein Hook homolog 3 (718 aa).

Position 1 is an N-acetylmethionine (Met1). Positions 1–164 are sufficient for interaction with microtubules; it reads MFSVESLERA…QELMSKESPV (164 aa). Ser3 and Ser6 each carry phosphoserine. A Calponin-homology (CH) domain is found at 10–126; that stretch reads AELCESLLTW…RMLQLILGCA (117 aa). Coiled coils occupy residues 167 to 433 and 462 to 667; these read GNDA…VQAQ and EIRE…YIVS. Residue Ser238 is modified to Phosphoserine. The required for association with Golgi stretch occupies residues 553 to 718; that stretch reads EKLHEANNEL…PGHVQPATAR (166 aa). Residues 556 to 718 form a required for interaction with MSR1 region; that stretch reads HEANNELQKK…PGHVQPATAR (163 aa). The tract at residues 682–718 is disordered; that stretch reads EDRLASTGSGQSFLARQRQATSSRRSYPGHVQPATAR. Phosphoserine occurs at positions 693 and 707. The segment covering 696 to 707 has biased composition (low complexity); the sequence is ARQRQATSSRRS.

It belongs to the hook family. In terms of assembly, self-associates. Component of the FTS/Hook/FHIP complex (FHF complex), composed of AKTIP/FTS, FHIP1B, and one or more members of the Hook family of proteins HOOK1, HOOK2, and HOOK3. May interact directly with AKTIP/FTS, HOOK1 and HOOK2. Associates with several subunits of the homotypic vesicular sorting complex (the HOPS complex) including VPS16 and VPS41; these interactions may be indirect. Interacts with MSR1, and this association is stimulated by ligand binding to MSR1. Interacts with microtubules. Part of a tripartite complex with dynein and dynactin, acts an adapter linking the dynein motor complex and dynactin. Interacts with dynein intermediate chain and dynactin (DCTN1). Interacts with CCDC181. Interacts with LRGUK. As to quaternary structure, (Microbial infection) Interacts with Salmonella typhimurium spiC.

It localises to the cytoplasm. It is found in the cytoskeleton. The protein resides in the golgi apparatus. Acts as an adapter protein linking the dynein motor complex to various cargos and converts dynein from a non-processive to a highly processive motor in the presence of dynactin. Facilitates the interaction between dynein and dynactin and activates dynein processivity (the ability to move along a microtubule for a long distance without falling off the track). Predominantly recruits 2 dyneins, which increases both the force and speed of the microtubule motor. Component of the FTS/Hook/FHIP complex (FHF complex). The FHF complex may function to promote vesicle trafficking and/or fusion via the homotypic vesicular protein sorting complex (the HOPS complex). May regulate clearance of endocytosed receptors such as MSR1. Participates in defining the architecture and localization of the Golgi complex. FHF complex promotes the distribution of AP-4 complex to the perinuclear area of the cell. Its function is as follows. (Microbial infection) May serve as a target for the spiC protein from Salmonella typhimurium, which inactivates it, leading to a strong alteration in cellular trafficking. The protein is Protein Hook homolog 3 of Homo sapiens (Human).